Reading from the N-terminus, the 140-residue chain is uncharacterized protein (140 aa).

The protein belongs to the MG439/MG440 family.

This is an uncharacterized protein from Mycoplasma pneumoniae (strain ATCC 29342 / M129 / Subtype 1) (Mycoplasmoides pneumoniae).